Reading from the N-terminus, the 124-residue chain is Large ribosomal subunit protein bL12 (124 aa).

It belongs to the bacterial ribosomal protein bL12 family. In terms of assembly, homodimer. Part of the ribosomal stalk of the 50S ribosomal subunit. Forms a multimeric L10(L12)X complex, where L10 forms an elongated spine to which 2 to 4 L12 dimers bind in a sequential fashion. Binds GTP-bound translation factors.

Its function is as follows. Forms part of the ribosomal stalk which helps the ribosome interact with GTP-bound translation factors. Is thus essential for accurate translation. In Phocaeicola vulgatus (strain ATCC 8482 / DSM 1447 / JCM 5826 / CCUG 4940 / NBRC 14291 / NCTC 11154) (Bacteroides vulgatus), this protein is Large ribosomal subunit protein bL12.